A 55-amino-acid polypeptide reads, in one-letter code: Large ribosomal subunit protein bL33 (55 aa).

It belongs to the bacterial ribosomal protein bL33 family.

The sequence is that of Large ribosomal subunit protein bL33 from Paraburkholderia phytofirmans (strain DSM 17436 / LMG 22146 / PsJN) (Burkholderia phytofirmans).